Here is a 400-residue protein sequence, read N- to C-terminus: Argininosuccinate synthase (400 aa).

ATP contacts are provided by residues 10–18 (AYSGGVDTS) and Ala38. Residue Tyr89 participates in L-citrulline binding. Gly119 serves as a coordination point for ATP. 3 residues coordinate L-aspartate: Thr121, Asn125, and Asp126. Asn125 contacts L-citrulline. L-citrulline is bound by residues Arg129, Ser177, Ser186, Glu262, and Tyr274.

It belongs to the argininosuccinate synthase family. Type 1 subfamily. As to quaternary structure, homotetramer.

It is found in the cytoplasm. The catalysed reaction is L-citrulline + L-aspartate + ATP = 2-(N(omega)-L-arginino)succinate + AMP + diphosphate + H(+). The protein operates within amino-acid biosynthesis; L-arginine biosynthesis; L-arginine from L-ornithine and carbamoyl phosphate: step 2/3. In Trichormus variabilis (strain ATCC 29413 / PCC 7937) (Anabaena variabilis), this protein is Argininosuccinate synthase.